Consider the following 55-residue polypeptide: Large ribosomal subunit protein bL33 (55 aa).

The protein belongs to the bacterial ribosomal protein bL33 family.

The chain is Large ribosomal subunit protein bL33 from Rhodopseudomonas palustris (strain BisB18).